The chain runs to 318 residues: Beta-ketoacyl-[acyl-carrier-protein] synthase III (318 aa).

Catalysis depends on residues cysteine 112 and histidine 245. The interval 246–250 is ACP-binding; that stretch reads QANIR. Asparagine 275 is an active-site residue.

The protein belongs to the thiolase-like superfamily. FabH family. Homodimer.

Its subcellular location is the cytoplasm. It carries out the reaction malonyl-[ACP] + acetyl-CoA + H(+) = 3-oxobutanoyl-[ACP] + CO2 + CoA. Its pathway is lipid metabolism; fatty acid biosynthesis. In terms of biological role, catalyzes the condensation reaction of fatty acid synthesis by the addition to an acyl acceptor of two carbons from malonyl-ACP. Catalyzes the first condensation reaction which initiates fatty acid synthesis and may therefore play a role in governing the total rate of fatty acid production. Possesses both acetoacetyl-ACP synthase and acetyl transacylase activities. Its substrate specificity determines the biosynthesis of branched-chain and/or straight-chain of fatty acids. The sequence is that of Beta-ketoacyl-[acyl-carrier-protein] synthase III from Nitrosomonas europaea (strain ATCC 19718 / CIP 103999 / KCTC 2705 / NBRC 14298).